Reading from the N-terminus, the 525-residue chain is Cytochrome P450 monooxygenase tpcC (525 aa).

A helical membrane pass occupies residues 13-33; that stretch reads LPVTLVSLLVGSIFYFCYLTV. Cys-457 contributes to the heme binding site.

The protein belongs to the cytochrome P450 family. It depends on heme as a cofactor.

It is found in the membrane. It participates in secondary metabolite biosynthesis; terpenoid biosynthesis. Cytochrome P450 monooxygenase; part of the gene cluster that mediates the biosynthesis of terpestacin. The bifunctional terpene synthase tpcA converts isopentenyl diphosphate (IPP) and dimethylallyl diphosphate (DMAPP) into the sesterterpene preterpestacin I. The C-terminal prenyltransferase (PT) domain of tpcA catalyzes formation of GFPP, whereas the N-terminal terpene cyclase (TC) domain catalyzes the cyclization of GFPP into preterpestacin I. The cytochrome P450 monooxygenase tpcB then hydroxylates preterpestacin I to yield 24-hydroxypreterpstacin I (renamed as preterpestacin II) whereas the cytochrome P450 monooxygenase tpcC further hydroxylates preterpestacin II to yield 16,17-dihydroxypreterpestacin II (renamed as preterpestacin III). Finally, the FAD-dependent monooxygenase tpcD converts preterpestacin III into terpestacin. The sequence is that of Cytochrome P450 monooxygenase tpcC from Cochliobolus heterostrophus (strain C5 / ATCC 48332 / race O) (Southern corn leaf blight fungus).